We begin with the raw amino-acid sequence, 372 residues long: Phospho-2-dehydro-3-deoxyheptonate aldolase, tyrosine-inhibited (372 aa).

The protein belongs to the class-I DAHP synthase family.

The protein localises to the cytoplasm. It localises to the nucleus. It carries out the reaction D-erythrose 4-phosphate + phosphoenolpyruvate + H2O = 7-phospho-2-dehydro-3-deoxy-D-arabino-heptonate + phosphate. It functions in the pathway metabolic intermediate biosynthesis; chorismate biosynthesis; chorismate from D-erythrose 4-phosphate and phosphoenolpyruvate: step 1/7. In terms of biological role, stereospecific condensation of phosphoenolpyruvate (PEP) and D-erythrose-4-phosphate (E4P) giving rise to 3-deoxy-D-arabino-heptulosonate-7-phosphate (DAHP). This is Phospho-2-dehydro-3-deoxyheptonate aldolase, tyrosine-inhibited (aro4) from Schizosaccharomyces pombe (strain 972 / ATCC 24843) (Fission yeast).